We begin with the raw amino-acid sequence, 149 residues long: 3-dehydroquinate dehydratase (149 aa).

Catalysis depends on Tyr26, which acts as the Proton acceptor. Asn78, His84, and Asp91 together coordinate substrate. His104 (proton donor) is an active-site residue. Residues 105-106 (LS) and Arg115 each bind substrate.

This sequence belongs to the type-II 3-dehydroquinase family. In terms of assembly, homododecamer.

It catalyses the reaction 3-dehydroquinate = 3-dehydroshikimate + H2O. It functions in the pathway metabolic intermediate biosynthesis; chorismate biosynthesis; chorismate from D-erythrose 4-phosphate and phosphoenolpyruvate: step 3/7. Its function is as follows. Catalyzes a trans-dehydration via an enolate intermediate. This chain is 3-dehydroquinate dehydratase, found in Polynucleobacter asymbioticus (strain DSM 18221 / CIP 109841 / QLW-P1DMWA-1) (Polynucleobacter necessarius subsp. asymbioticus).